The primary structure comprises 488 residues: Glutamyl-tRNA(Gln) amidotransferase subunit A (488 aa).

Active-site charge relay system residues include K77 and S152. The active-site Acyl-ester intermediate is the S176.

The protein belongs to the amidase family. GatA subfamily. As to quaternary structure, heterotrimer of A, B and C subunits.

It carries out the reaction L-glutamyl-tRNA(Gln) + L-glutamine + ATP + H2O = L-glutaminyl-tRNA(Gln) + L-glutamate + ADP + phosphate + H(+). Its function is as follows. Allows the formation of correctly charged Gln-tRNA(Gln) through the transamidation of misacylated Glu-tRNA(Gln) in organisms which lack glutaminyl-tRNA synthetase. The reaction takes place in the presence of glutamine and ATP through an activated gamma-phospho-Glu-tRNA(Gln). This is Glutamyl-tRNA(Gln) amidotransferase subunit A from Streptococcus thermophilus (strain CNRZ 1066).